Reading from the N-terminus, the 729-residue chain is Fatty acid oxidation complex subunit alpha (729 aa).

Residues 1 to 189 (MLYKGDTLYV…KIGLIDGIVK (189 aa)) form an enoyl-CoA hydratase/isomerase region. D296 is a binding site for substrate. The 3-hydroxyacyl-CoA dehydrogenase stretch occupies residues 311-729 (EMPKQAAVLG…ARPVGALKTA (419 aa)). Residues M324, D343, 400-402 (VVE), K407, and S429 each bind NAD(+). H450 (for 3-hydroxyacyl-CoA dehydrogenase activity) is an active-site residue. N453 contributes to the NAD(+) binding site. Substrate-binding residues include N500 and Y660. Positions 708–729 (RHNEPYYPPVEPARPVGALKTA) are disordered.

In the N-terminal section; belongs to the enoyl-CoA hydratase/isomerase family. The protein in the C-terminal section; belongs to the 3-hydroxyacyl-CoA dehydrogenase family. As to quaternary structure, heterotetramer of two alpha chains (FadB) and two beta chains (FadA).

The enzyme catalyses a (3S)-3-hydroxyacyl-CoA + NAD(+) = a 3-oxoacyl-CoA + NADH + H(+). It carries out the reaction a (3S)-3-hydroxyacyl-CoA = a (2E)-enoyl-CoA + H2O. The catalysed reaction is a 4-saturated-(3S)-3-hydroxyacyl-CoA = a (3E)-enoyl-CoA + H2O. It catalyses the reaction (3S)-3-hydroxybutanoyl-CoA = (3R)-3-hydroxybutanoyl-CoA. The enzyme catalyses a (3Z)-enoyl-CoA = a 4-saturated (2E)-enoyl-CoA. It carries out the reaction a (3E)-enoyl-CoA = a 4-saturated (2E)-enoyl-CoA. Its pathway is lipid metabolism; fatty acid beta-oxidation. In terms of biological role, involved in the aerobic and anaerobic degradation of long-chain fatty acids via beta-oxidation cycle. Catalyzes the formation of 3-oxoacyl-CoA from enoyl-CoA via L-3-hydroxyacyl-CoA. It can also use D-3-hydroxyacyl-CoA and cis-3-enoyl-CoA as substrate. This is Fatty acid oxidation complex subunit alpha from Enterobacter sp. (strain 638).